The following is a 124-amino-acid chain: Con-Ins Tx1 (124 aa).

An N-terminal signal peptide occupies residues 1–24 (MTTSSYFLLVALGLLLYVFQSSFG). 4 cysteine pairs are disulfide-bonded: Cys-29-Cys-107, Cys-41-Cys-110, Cys-53-Cys-123, and Cys-109-Cys-114. Pro-34 carries the post-translational modification 4-hydroxyproline; partial. A propeptide spans 59–92 (EQGGANNARANTGRTSSLMKRRGFLSLLKKRGKR) (c peptide). Glu-118 bears the 4-carboxyglutamate; partial mark.

The protein belongs to the insulin family. As to quaternary structure, heterodimer of A and B chains; disulfide-linked. Expressed by the venom gland.

It is found in the secreted. Functionally, this venom insulin facilitates prey capture by rapidly inducing hypoglycemic shock. Intraperitoneal injection of this peptide into zebrafish lowers blood glucose with the same potency than human insulin. In vivo, when applied to water, this peptide reduces overall locomotor activity of zebrafish larvae, observed as a significant decrease in the percentage of time spent swimming and movement frequency. This chain is Con-Ins Tx1, found in Conus textile (Cloth-of-gold cone).